A 268-amino-acid chain; its full sequence is 4-hydroxy-tetrahydrodipicolinate reductase (268 aa).

Residues 10 to 15 and Asp36 contribute to the NAD(+) site; that span reads GASGRM. Arg37 is an NADP(+) binding site. NAD(+)-binding positions include 99–101 and 123–126; these read GTT and SANM. Residue His156 is the Proton donor/acceptor of the active site. A (S)-2,3,4,5-tetrahydrodipicolinate-binding site is contributed by His157. Residue Lys160 is the Proton donor of the active site. Residue 166 to 167 participates in (S)-2,3,4,5-tetrahydrodipicolinate binding; the sequence is GT.

This sequence belongs to the DapB family.

Its subcellular location is the cytoplasm. It carries out the reaction (S)-2,3,4,5-tetrahydrodipicolinate + NAD(+) + H2O = (2S,4S)-4-hydroxy-2,3,4,5-tetrahydrodipicolinate + NADH + H(+). The enzyme catalyses (S)-2,3,4,5-tetrahydrodipicolinate + NADP(+) + H2O = (2S,4S)-4-hydroxy-2,3,4,5-tetrahydrodipicolinate + NADPH + H(+). Its pathway is amino-acid biosynthesis; L-lysine biosynthesis via DAP pathway; (S)-tetrahydrodipicolinate from L-aspartate: step 4/4. Functionally, catalyzes the conversion of 4-hydroxy-tetrahydrodipicolinate (HTPA) to tetrahydrodipicolinate. The chain is 4-hydroxy-tetrahydrodipicolinate reductase from Burkholderia thailandensis (strain ATCC 700388 / DSM 13276 / CCUG 48851 / CIP 106301 / E264).